Here is a 725-residue protein sequence, read N- to C-terminus: MSASDLTSVQAGAPQGRRQILVTSALPYANGQIHIGHLVEYIQTDIWVRTMRMHGHEIYYIGADDTHGTPVMLRAEQEGVSPKQLIERVWREHKRDFDSFGVSFDNFYTTDSDENRVLSETIYLALKEAGFIAEREIEQAYDPVRQMFLPDRFIKGECPKCHAKDQYGDSCEVCGTTYQPTDLIHPYSVVSGAAPVRKTSTHYFFRLSDPRCEAFLREWVSGLAQPEATNKMREWLGEAGEAKLADWDISRDAPYFGFEIPGAPGKYFYVWLDAPVGYYASFKNLCERRGLDFDAWIRKDSTTEQYHFIGKDILYFHTLFWPAMLEFSGHRTPTNVFAHGFLTVDGAKMSKSRGTFITAQSYIDTGLNPEWLRYYFAAKLNATMEDIDLNLEDFQARVNSDLVGKYVNIASRAAGFLLKRFDGRVQASAMNHPLLATLRGAIPQIAAHYEAREYGRALRQTMELADAVNGYVDSAKPWELAKDPANAVALHETCSVSLEAFRLLSLALKPVLPRVAQGVEAFLGIAPLTWADAGTPLSPEQPVRAYQHLMTRVDPKQIDALLAANRGSLQGTAAAAEAGAANGNGAGSKNGKGAKAAAQPAASAANADDGASPIISIDDFAKIDLRIAKIVACQAVEGSDKLLQLTLDVGEERTRNVFSGIKSAYRPEQLVGKLTVMVANLAPRKMKFGLSEGMVLAASAADEKAEPGLYILEPHSGAKPGMRVK.

A 'HIGH' region motif is present at residues 27–37; it reads PYANGQIHIGH. Residues cysteine 158, cysteine 161, cysteine 171, and cysteine 174 each coordinate Zn(2+). Positions 348–352 match the 'KMSKS' region motif; that stretch reads KMSKS. Lysine 351 is an ATP binding site. One can recognise a tRNA-binding domain in the interval 619–725; the sequence is DFAKIDLRIA…SGAKPGMRVK (107 aa).

This sequence belongs to the class-I aminoacyl-tRNA synthetase family. MetG type 1 subfamily. As to quaternary structure, homodimer. Requires Zn(2+) as cofactor.

Its subcellular location is the cytoplasm. The catalysed reaction is tRNA(Met) + L-methionine + ATP = L-methionyl-tRNA(Met) + AMP + diphosphate. Is required not only for elongation of protein synthesis but also for the initiation of all mRNA translation through initiator tRNA(fMet) aminoacylation. This Burkholderia pseudomallei (strain 1710b) protein is Methionine--tRNA ligase.